The chain runs to 524 residues: MIHKSDSDTTVRRFDLSQQFTAMQRISVVLSRATEASKTLQEVLSVLHNDAFMQHGMICLYDSQQEILSIEALQQTENQTLPGSTQIRYRPGEGLVGTVLAQGQSLVLPRVADDQRFLDRLSLYDYDLPFIAVPLMGPHSRPIGVLAAQPMARQEERLPACTRFLETVANLIAQTIRLMILPTSAAQPPQQSPRVERPRACTSSRGFGLENMVGKSPAMRQIMDIIRQVSRWDTTVLVRGESGTGKELIANAIHHNSPRAAAAFVKFNCAALPDNLLESELFGHEKGAFTGAVRQRKGRFELADGGTLFLDEIGESSASFQAKLLRILQEGEMERVGGDETLRVNVRIIAATNRHLEEEVRLGHFREDLYYRLNVMPIALPPLRERQEDIAELAHFLVRKIAHSQGRTLRISDGAIRLLMEYSWPGNVRELENCLERSAVLSESGLIDRDVILFNHRDNPPKALASSGPAEDGWLDNSLDERQRLIAALEKAGWVQAKAARLLGMTPRQVAYRIQIMDITMPRL.

Residues 1–182 are a domain; the sequence is MIHKSDSDTT…AQTIRLMILP (182 aa). One can recognise a GAF domain in the interval 35-176; the sequence is EASKTLQEVL…TVANLIAQTI (142 aa). Residues 212–481 enclose the Sigma-54 factor interaction domain; the sequence is MVGKSPAMRQ…DGWLDNSLDE (270 aa). Residues 240 to 247 and 303 to 312 contribute to the ATP site; these read GESGTGKE and ADGGTLFLDE. The segment at 482–524 is C-terminal DNA-binding domain; the sequence is RQRLIAALEKAGWVQAKAARLLGMTPRQVAYRIQIMDITMPRL. The segment at residues 496-515 is a DNA-binding region (H-T-H motif); the sequence is QAKAARLLGMTPRQVAYRIQ.

As to quaternary structure, interacts with sigma-54.

Its function is as follows. Required for activation of most nif operons, which are directly involved in nitrogen fixation. The polypeptide is Nif-specific regulatory protein (nifA) (Klebsiella oxytoca).